The sequence spans 112 residues: Photosystem II reaction center Psb28 protein (112 aa).

Belongs to the Psb28 family. Part of the photosystem II complex.

The protein resides in the cellular thylakoid membrane. The chain is Photosystem II reaction center Psb28 protein from Synechococcus elongatus (strain ATCC 33912 / PCC 7942 / FACHB-805) (Anacystis nidulans R2).